Consider the following 366-residue polypeptide: Histidinol-phosphate aminotransferase (366 aa).

Lys228 is subject to N6-(pyridoxal phosphate)lysine.

This sequence belongs to the class-II pyridoxal-phosphate-dependent aminotransferase family. Histidinol-phosphate aminotransferase subfamily. As to quaternary structure, homodimer. It depends on pyridoxal 5'-phosphate as a cofactor.

It catalyses the reaction L-histidinol phosphate + 2-oxoglutarate = 3-(imidazol-4-yl)-2-oxopropyl phosphate + L-glutamate. It participates in amino-acid biosynthesis; L-histidine biosynthesis; L-histidine from 5-phospho-alpha-D-ribose 1-diphosphate: step 7/9. This chain is Histidinol-phosphate aminotransferase, found in Campylobacter fetus subsp. fetus (strain 82-40).